The chain runs to 67 residues: MSVISNPSKYKQSNTNKHMLEFLYSFFLCIPKLPNGSGTLCSSTRTISESNTIDVAFLNAFGMYSLR.

This is an uncharacterized protein from Vaccinia virus (strain Copenhagen) (VACV).